The primary structure comprises 365 residues: Succinate--CoA ligase [ADP-forming] subunit beta (365 aa).

Positions 9–230 (KEIFRAEGIS…EMEEYEPEEF (222 aa)) constitute an ATP-grasp domain. Residues lysine 45, 52–54 (GRG), glutamate 90, isoleucine 93, and glutamate 98 contribute to the ATP site. Asparagine 190 and aspartate 203 together coordinate Mg(2+). Substrate is bound by residues asparagine 244 and 300–302 (GIT).

Belongs to the succinate/malate CoA ligase beta subunit family. Heterotetramer of two alpha and two beta subunits. Mg(2+) is required as a cofactor.

It carries out the reaction succinate + ATP + CoA = succinyl-CoA + ADP + phosphate. It catalyses the reaction GTP + succinate + CoA = succinyl-CoA + GDP + phosphate. It participates in carbohydrate metabolism; tricarboxylic acid cycle; succinate from succinyl-CoA (ligase route): step 1/1. In terms of biological role, succinyl-CoA synthetase functions in the citric acid cycle (TCA), coupling the hydrolysis of succinyl-CoA to the synthesis of either ATP or GTP and thus represents the only step of substrate-level phosphorylation in the TCA. The beta subunit provides nucleotide specificity of the enzyme and binds the substrate succinate, while the binding sites for coenzyme A and phosphate are found in the alpha subunit. The chain is Succinate--CoA ligase [ADP-forming] subunit beta from Methanothermobacter thermautotrophicus (strain ATCC 29096 / DSM 1053 / JCM 10044 / NBRC 100330 / Delta H) (Methanobacterium thermoautotrophicum).